The primary structure comprises 162 residues: Nucleotide-binding protein Francci3_0558 (162 aa).

This sequence belongs to the YajQ family.

In terms of biological role, nucleotide-binding protein. The chain is Nucleotide-binding protein Francci3_0558 from Frankia casuarinae (strain DSM 45818 / CECT 9043 / HFP020203 / CcI3).